A 1194-amino-acid polypeptide reads, in one-letter code: Probable disease resistance protein RPP1 (1194 aa).

The tract at residues 1–27 (MGSVMSLGCSKRKATNQDVDSESRKRR) is disordered. Positions 96–260 (WKHDVFPSFH…KISTDVSNML (165 aa)) constitute a TIR domain. 105-110 (HGADVR) lines the NAD(+) pocket. Residue E171 is part of the active site. Residues 280 to 535 (DMLEQLLRLD…ACLFNGESTT (256 aa)) form the NB-ARC domain. 14 LRR repeats span residues 623–647 (LSNT…HFVR), 658–681 (QLAL…GYES), 690–713 (PEFL…TKQL), 714–737 (RNLK…STAT), 739–760 (LEEL…IEKL), 761–784 (TSLQ…ENAT), 786–807 (LREL…IGTA), 808–831 (TNLK…IGDI), 832–855 (TDLE…IGNL), 866–878 (CSKL…NINL), 879–899 (KSLD…PEIS), 900–922 (THIS…IMSW), 943–965 (FDII…VKRM), and 966–991 (SRLR…SLDY). The segment at 1170-1194 (RRSSSPDLSPESSRVSSYDHCLRGD) is disordered. A compositionally biased stretch (low complexity) spans 1171–1185 (RSSSPDLSPESSRVS).

The protein belongs to the disease resistance TIR-NB-LRR family.

It carries out the reaction NAD(+) + H2O = ADP-D-ribose + nicotinamide + H(+). Functionally, TIR-NB-LRR receptor-like protein that confers resistance to the pathogen Hyaloperonospora arabidopsis. Probably acts as a NAD(+) hydrolase (NADase): in response to activation, catalyzes cleavage of NAD(+) into ADP-D-ribose (ADPR) and nicotinamide; NAD(+) cleavage triggering a defense system that promotes cell death. This Arabidopsis thaliana (Mouse-ear cress) protein is Probable disease resistance protein RPP1.